The chain runs to 273 residues: Inactive endochitinase At2g43600 (273 aa).

A signal peptide spans 1–22 (MTIKNVIFSLFILAILAETVFS). The 39-residue stretch at 23–61 (QNCMDTSCPGLKECCSRWGFCGTKDEYCGFFCFSGPCNI) folds into the Chitin-binding type-1 domain. 4 disulfides stabilise this stretch: Cys25/Cys37, Cys30/Cys43, Cys36/Cys50, and Cys54/Cys59. The interval 78–273 (GKIETVITSA…GVTPDQGLDC (196 aa)) is catalytic. N-linked (GlcNAc...) asparagine glycosylation occurs at Asn99.

Belongs to the glycosyl hydrolase 19 family. Chitinase class I subfamily.

The sequence is that of Inactive endochitinase At2g43600 from Arabidopsis thaliana (Mouse-ear cress).